Here is a 993-residue protein sequence, read N- to C-terminus: uncharacterized protein (993 aa).

The N-terminal stretch at 1 to 28 is a signal peptide; it reads MKLFPRSILITLVLSFALNLGIVTKIHA. Helical transmembrane passes span 331-351, 359-379, 392-412, 494-514, 521-541, 554-574, and 699-719; these read IVTA…LLAG, YINF…INIT, MIQW…SWVM, MLVS…AFMV, MISI…FLFA, MISF…MFSV, and IKNI…MYNF. The segment at 779-904 is disordered; that stretch reads GQGGGASDLE…EKVDSTSKGT (126 aa). Positions 805–829 are enriched in low complexity; the sequence is TSAPAVTTPTASSSVASSSPKTVSS. The segment covering 838-850 has biased composition (pro residues); sequence PPAPTEAVSPPPA. Residues 866–879 show a composition bias toward basic and acidic residues; sequence IIRDNNQESKKEID.

The protein belongs to the TrbL/VirB6 family.

It is found in the cell membrane. This is an uncharacterized protein from Rickettsia conorii (strain ATCC VR-613 / Malish 7).